Consider the following 402-residue polypeptide: Elongation factor Tu (402 aa).

Positions 16-211 constitute a tr-type G domain; sequence KEHINIGTIG…AVDSYIDSPV (196 aa). The tract at residues 25-32 is G1; sequence GHVDHGKT. 25–32 provides a ligand contact to GTP; the sequence is GHVDHGKT. T32 lines the Mg(2+) pocket. The interval 66-70 is G2; that stretch reads GITIN. Residues 87–90 form a G3 region; that stretch reads DCPG. Residues 87–91 and 142–145 contribute to the GTP site; these read DCPGH and NKID. Residues 142 to 145 are G4; it reads NKID. The segment at 181–183 is G5; the sequence is SAR.

Belongs to the TRAFAC class translation factor GTPase superfamily. Classic translation factor GTPase family. EF-Tu/EF-1A subfamily. As to quaternary structure, monomer.

It is found in the cytoplasm. It carries out the reaction GTP + H2O = GDP + phosphate + H(+). Functionally, GTP hydrolase that promotes the GTP-dependent binding of aminoacyl-tRNA to the A-site of ribosomes during protein biosynthesis. The sequence is that of Elongation factor Tu from Mesomycoplasma hyopneumoniae (strain J / ATCC 25934 / NCTC 10110) (Mycoplasma hyopneumoniae).